The sequence spans 613 residues: Chaperone protein dnaK (613 aa).

The protein belongs to the heat shock protein 70 family.

It localises to the plastid. Its subcellular location is the chloroplast. In terms of biological role, acts as a chaperone. In Phaeodactylum tricornutum (strain CCAP 1055/1), this protein is Chaperone protein dnaK.